We begin with the raw amino-acid sequence, 414 residues long: Protein HIM1 (414 aa).

Functionally, may participate in the control of processing of mutational intermediates appearing during error-prone bypass of DNA damage. The polypeptide is Protein HIM1 (HIM1) (Saccharomyces cerevisiae (strain ATCC 204508 / S288c) (Baker's yeast)).